An 83-amino-acid chain; its full sequence is Small ribosomal subunit protein uS17 (83 aa).

The protein belongs to the universal ribosomal protein uS17 family. Part of the 30S ribosomal subunit.

One of the primary rRNA binding proteins, it binds specifically to the 5'-end of 16S ribosomal RNA. The chain is Small ribosomal subunit protein uS17 from Francisella philomiragia subsp. philomiragia (strain ATCC 25017 / CCUG 19701 / FSC 153 / O#319-036).